The following is a 101-amino-acid chain: Pro-corazonin (101 aa).

The signal sequence occupies residues 1–16; that stretch reads MLVLFVLSLVVSCALC. Asparagine 27 is modified (asparagine amide). The propeptide occupies 31–101; that stretch reads SNFPAEISAL…REKAPNNDNY (71 aa).

Belongs to the corazonin family. As to expression, expressed in central brain and the retrocerebral complex but not in antennal lobes, optic lobes or in gnathal, thoracic and abdominal ganglia (at protein level).

The protein localises to the secreted. Cardioactive peptide. Corazonin is probably involved in the physiological regulation of the heart beat. The polypeptide is Pro-corazonin (Camponotus floridanus (Florida carpenter ant)).